Here is a 634-residue protein sequence, read N- to C-terminus: Probable potassium transport system protein Kup 1 (634 aa).

The next 12 membrane-spanning stretches (helical) occupy residues 20–40 (FLTLSLGSIGVVYGDIGTSPL), 64–84 (VMSLMLWTLVIIVTLKYVLLI), 110–130 (FAAISLLGMAGAALFYGDAII), 148–168 (PVFDPYILPLSMAILIGLFVV), 176–196 (VAAWFGPIMLLWFTVMALGGI), 224–244 (AGLLALGAVFLTVTGAEALYA), 256–276 (FAWFAVVFPALALCYLGQGAM), 290–310 (FLFPEWALLPMVGLATAATII), 348–368 (IYIPRANWLLLIAVLYLVFAF), 377–397 (AYGIAVTGTMVITSVMAYFVM), 405–425 (VATSALIIAPFLTVDLIFLMA), and 430–450 (IFEGGWIPLVIGGGLMGVMIT).

This sequence belongs to the HAK/KUP transporter (TC 2.A.72) family.

It localises to the cell inner membrane. It carries out the reaction K(+)(in) + H(+)(in) = K(+)(out) + H(+)(out). Its function is as follows. Transport of potassium into the cell. Likely operates as a K(+):H(+) symporter. This Rhodopseudomonas palustris (strain BisB5) protein is Probable potassium transport system protein Kup 1.